Consider the following 135-residue polypeptide: Protein NrdI (135 aa).

It belongs to the NrdI family.

Functionally, probably involved in ribonucleotide reductase function. This Rhizobium johnstonii (strain DSM 114642 / LMG 32736 / 3841) (Rhizobium leguminosarum bv. viciae) protein is Protein NrdI.